A 338-amino-acid chain; its full sequence is Glycerol-3-phosphate dehydrogenase [NAD(P)+] (338 aa).

4 residues coordinate NADPH: S14, Y15, H35, and K109. Sn-glycerol 3-phosphate-binding residues include K109, G138, and T140. Residue A142 coordinates NADPH. Positions 194, 247, 257, 258, and 259 each coordinate sn-glycerol 3-phosphate. K194 acts as the Proton acceptor in catalysis. NADPH is bound at residue R258. NADPH contacts are provided by V282 and E284.

This sequence belongs to the NAD-dependent glycerol-3-phosphate dehydrogenase family.

Its subcellular location is the cytoplasm. The catalysed reaction is sn-glycerol 3-phosphate + NAD(+) = dihydroxyacetone phosphate + NADH + H(+). The enzyme catalyses sn-glycerol 3-phosphate + NADP(+) = dihydroxyacetone phosphate + NADPH + H(+). Its pathway is membrane lipid metabolism; glycerophospholipid metabolism. In terms of biological role, catalyzes the reduction of the glycolytic intermediate dihydroxyacetone phosphate (DHAP) to sn-glycerol 3-phosphate (G3P), the key precursor for phospholipid synthesis. In Shewanella oneidensis (strain ATCC 700550 / JCM 31522 / CIP 106686 / LMG 19005 / NCIMB 14063 / MR-1), this protein is Glycerol-3-phosphate dehydrogenase [NAD(P)+].